We begin with the raw amino-acid sequence, 528 residues long: Beta-hexosaminidase subunit alpha (528 aa).

The signal sequence occupies residues 1 to 22 (MAGCRLWVSLLLAAALACLATA). The propeptide occupies 23–88 (LWPWPQYIQT…PRPSFSKKQQ (66 aa)). C58 and C104 are disulfide-bonded. N115, N157, and N295 each carry an N-linked (GlcNAc...) asparagine glycan. C277 and C328 are oxidised to a cystine. Residue E323 is the Proton donor of the active site. Positions 422 to 423 (NR) are critical for hydrolysis GM2 gangliosides. N487 carries N-linked (GlcNAc...) asparagine glycosylation. C504 and C521 form a disulfide bridge.

This sequence belongs to the glycosyl hydrolase 20 family. As to quaternary structure, there are 3 beta-hexosaminidase isozymes: isozyme A (hexosaminidase A) is a heterodimer composed of one subunit alpha and one subunit beta (chain A and B); isozyme B (hexosaminidase B) is a homodimer of two beta subunits (two chains A and B); isozyme S (hexosaminidase S) is a homodimer of two alpha subunits. The composition of the dimer (isozyme A versus isozyme S) has a significant effect on the substrate specificity of the alpha subunit active site.

The protein localises to the lysosome. The catalysed reaction is Hydrolysis of terminal non-reducing N-acetyl-D-hexosamine residues in N-acetyl-beta-D-hexosaminides.. It carries out the reaction N-acetyl-beta-D-galactosaminyl-(1-&gt;4)-beta-D-3-sulfogalactosyl-(1-&gt;4)-beta-D-glucosyl-(1&lt;-&gt;1')-ceramide + H2O = a beta-D-3-sulfogalactosyl-(1-&gt;4)-beta-D-glucosyl-(1&lt;-&gt;1')-ceramide + N-acetyl-beta-D-galactosamine. It catalyses the reaction a ganglioside GM2 (d18:1(4E)) + H2O = a ganglioside GM3 (d18:1(4E)) + N-acetyl-beta-D-galactosamine. The enzyme catalyses a ganglioside GM2 + H2O = a ganglioside GM3 + N-acetyl-beta-D-galactosamine. The catalysed reaction is beta-D-GalNAc-(1-&gt;4)-alpha-L-IdoA-(1-&gt;3)-beta-D-GalNAc-4-sulfate-(1-&gt;4)-alpha-L-IdoA-(1-&gt;3)-D-GalNAc-4-sulfate + H2O = alpha-L-IdoA-(1-&gt;3)-beta-D-GalNAc-4-sulfate-(1-&gt;4)-alpha-L-IdoA-(1-&gt;3)-D-GalNAc-4-sulfate + N-acetyl-D-galactosamine. It carries out the reaction N-acetyl-beta-D-6-sulfogalactosaminyl-(1-&gt;4)-alpha-L-iduronyl-(1-&gt;3)-N-acetyl-D-6-sulfogalactosamine + H2O = alpha-L-iduronyl-(1-&gt;3)-N-acetyl-D-6-sulfogalactosamine + N-acetyl-D-6-sulfogalactosamine. Its activity is regulated as follows. Addition of GM2A stimulates the hydrolysis of sulfated glycosphingolipid SM2 and the ganglioside GM2. Hydrolyzes the non-reducing end N-acetyl-D-hexosamine and/or sulfated N-acetyl-D-hexosamine of glycoconjugates, such as the oligosaccharide moieties from proteins and neutral glycolipids, or from certain mucopolysaccharides. The isozyme S is as active as the isozyme A on the anionic bis-sulfated glycans, the chondroitin-6-sulfate trisaccharide (C6S-3), and the dermatan sulfate pentasaccharide, and the sulfated glycosphingolipid SM2. The isozyme B does not hydrolyze each of these substrates, however hydrolyzes efficiently neutral oligosaccharide. Only the isozyme A is responsible for the degradation of GM2 gangliosides in the presence of GM2A. This is Beta-hexosaminidase subunit alpha from Rattus norvegicus (Rat).